A 253-amino-acid chain; its full sequence is NAC transcription factor 32 (253 aa).

Residues 10–160 form the NAC domain; it reads FPPGFRFHPT…DWVLCRIYNK (151 aa). Residues 106–166 mediate DNA binding; the sequence is VGIKKALVFY…IYNKKGVIEK (61 aa).

As to expression, expressed in germinating seeds, roots, leaf veins, open flowers and silique stalks.

The protein resides in the nucleus. In terms of biological role, transcriptional activator that positively regulates age-dependent senescence, dark-induced leaf senescence and stress-induced senescence. Regulates leaf senescence through the modulation of the expression of senescence-associated genes SGR1/NYE1, SAG113 and SAUR36/SAG201, which are involved in chlorophyll degradation, and abscisic acid (ABA) and auxin promotion of senescence, respectively. Promotes reactive oxygen species (ROS) production during age-dependent and stress-induced senescence. Positively regulates auxin-mediated responses in roots. Stress-responsive NAC transcription factor involved in ABA-inducible leaf senescence signaling. Required for normal seed development and morphology. This is NAC transcription factor 32 from Arabidopsis thaliana (Mouse-ear cress).